We begin with the raw amino-acid sequence, 224 residues long: Cytidylate kinase (224 aa).

Position 11 to 19 (11 to 19) interacts with ATP; sequence GPAAAGKST.

It belongs to the cytidylate kinase family. Type 1 subfamily.

The protein resides in the cytoplasm. It carries out the reaction CMP + ATP = CDP + ADP. The catalysed reaction is dCMP + ATP = dCDP + ADP. This is Cytidylate kinase from Listeria monocytogenes serovar 1/2a (strain ATCC BAA-679 / EGD-e).